An 874-amino-acid polypeptide reads, in one-letter code: Eukaryotic translation initiation factor 3 subunit C (874 aa).

A disordered region spans residues 1-70 (MSRFFVSGYT…DGRPSGPAYF (70 aa)). Residues 14–61 (SSEEEDLLSTSEEELLSSSDEGEDNESDSSFFGEDDDESEESSSDDED) show a composition bias toward acidic residues. The PCI domain maps to 598 to 774 (FHQHINLELL…KFISFTSTTE (177 aa)). The interval 797–874 (KNEKTQSNGY…SNNDEFQATA (78 aa)) is disordered. Over residues 813–848 (KDQQNQQQQNQNQNQQQQQNQQQQQQQQSSQQQSNN) the composition is skewed to low complexity. The segment covering 862-874 (NVNSNNDEFQATA) has biased composition (polar residues).

The protein belongs to the eIF-3 subunit C family. In terms of assembly, component of the eukaryotic translation initiation factor 3 (eIF-3) complex.

Its subcellular location is the cytoplasm. Component of the eukaryotic translation initiation factor 3 (eIF-3) complex, which is involved in protein synthesis of a specialized repertoire of mRNAs and, together with other initiation factors, stimulates binding of mRNA and methionyl-tRNAi to the 40S ribosome. The eIF-3 complex specifically targets and initiates translation of a subset of mRNAs involved in cell proliferation. This Candida albicans (strain SC5314 / ATCC MYA-2876) (Yeast) protein is Eukaryotic translation initiation factor 3 subunit C.